The sequence spans 79 residues: Large ribosomal subunit protein bL31 (79 aa).

Belongs to the bacterial ribosomal protein bL31 family. Type A subfamily. Part of the 50S ribosomal subunit.

In terms of biological role, binds the 23S rRNA. This chain is Large ribosomal subunit protein bL31, found in Trichormus variabilis (strain ATCC 29413 / PCC 7937) (Anabaena variabilis).